The chain runs to 380 residues: TPR repeat-containing thioredoxin TDX (380 aa).

Position 2 is an N-acetylvaline (V2). The span at 49–59 (TERDYEDKAET) shows a compositional bias: basic and acidic residues. A disordered region spans residues 49-115 (TERDYEDKAE…DENRDDAQSE (67 aa)). Over residues 69-91 (DDDDDIMESDVELDNSDVVEPDN) the composition is skewed to acidic residues. Residues 106–115 (DENRDDAQSE) are compositionally biased toward basic and acidic residues. TPR repeat units lie at residues 112 to 145 (AQSE…NPTS), 147 to 179 (ILYA…NSDS), and 181 to 213 (KGYK…DYDE). Basic and acidic residues predominate over residues 240-263 (RKEKELQRAERERRKQQEAQEREA). The segment at 240 to 265 (RKEKELQRAERERRKQQEAQEREAQA) is disordered. The Thioredoxin domain occupies 252–378 (RRKQQEAQER…LEQKIAQHSS (127 aa)). Active-site nucleophile residues include C304 and C307. C304 and C307 are oxidised to a cystine.

The protein belongs to the thioredoxin family. As to quaternary structure, oligomerization under high temperature.

Functionally, thiol-disulfide oxidoreductase that possesses insulin disulfide bonds reducing activity, disulfide reductase, foldase chaperone and holdase chaperone activities. Heat shock causes oligomerization and formation of high molecular weiht (HMW) complexes with concomitant functional switching from a disulfide reductase and foldase chaperone to a holdase chaperone. May interact with HSP70 proteins through the TPR repeats. In Arabidopsis thaliana (Mouse-ear cress), this protein is TPR repeat-containing thioredoxin TDX (TDX).